Reading from the N-terminus, the 173-residue chain is Alpha-crystallin A chain (173 aa).

Residue Met1 is modified to N-acetylmethionine. Positions 1 to 63 (MDVTIQHPWF…RTVLDSGISE (63 aa)) are required for complex formation with BFSP1 and BFSP2. Position 6 is a deamidated glutamine; partial (Gln6). Ser45 is subject to Phosphoserine. A Deamidated glutamine; partial modification is found at Gln50. In terms of domain architecture, sHSP spans 52 to 162 (LFRTVLDSGI…GHSERAIPVS (111 aa)). Lys99 carries the N6-acetyllysine modification. His100 is a Zn(2+) binding site. Asn101 carries the deamidated asparagine; partial modification. Zn(2+) is bound by residues Glu102 and His107. Ser122 is subject to Phosphoserine. Asn123 carries the deamidated asparagine; partial modification. A disulfide bridge connects residues Cys131 and Cys142. The segment at 146–173 (VQSSMDDGHSERAIPVSREEKPSSVPSS) is disordered. The residue at position 147 (Gln147) is a Deamidated glutamine; partial. The span at 151–167 (DDGHSERAIPVSREEKP) shows a compositional bias: basic and acidic residues. Residue His154 participates in Zn(2+) binding. Ser162 is a glycosylation site (O-linked (GlcNAc) serine).

It belongs to the small heat shock protein (HSP20) family. As to quaternary structure, heteromer composed of three CRYAA and one CRYAB subunits. Inter-subunit bridging via zinc ions enhances stability, which is crucial as there is no protein turn over in the lens. Can also form homodimers and homotetramers (dimers of dimers) which serve as the building blocks of homooligomers. Within homooligomers, the zinc-binding motif is created from residues of 3 different molecules. His-100 and Glu-102 from one molecule are ligands of the zinc ion, and His-107 and His-154 residues from additional molecules complete the site with tetrahedral coordination geometry. Part of a complex required for lens intermediate filament formation composed of BFSP1, BFSP2 and CRYAA. Post-translationally, undergoes age-dependent proteolytical cleavage at the C-terminus.

The protein localises to the cytoplasm. It localises to the nucleus. In terms of biological role, contributes to the transparency and refractive index of the lens. In its oxidized form (absence of intramolecular disulfide bond), acts as a chaperone, preventing aggregation of various proteins under a wide range of stress conditions. Required for the correct formation of lens intermediate filaments as part of a complex composed of BFSP1, BFSP2 and CRYAA. The protein is Alpha-crystallin A chain (CRYAA) of Orycteropus afer (Aardvark).